The following is a 483-amino-acid chain: Cobyric acid synthase (483 aa).

Residues 251–438 form the GATase cobBQ-type domain; that stretch reads ALIVAVPMLP…LHGVFSADRF (188 aa). Cysteine 333 acts as the Nucleophile in catalysis. The active site involves histidine 430.

Belongs to the CobB/CobQ family. CobQ subfamily.

Its pathway is cofactor biosynthesis; adenosylcobalamin biosynthesis. Catalyzes amidations at positions B, D, E, and G on adenosylcobyrinic A,C-diamide. NH(2) groups are provided by glutamine, and one molecule of ATP is hydrogenolyzed for each amidation. This Brucella suis biovar 1 (strain 1330) protein is Cobyric acid synthase.